The chain runs to 1128 residues: Testis-expressed protein 2 (1128 aa).

Disordered regions lie at residues 1–28 (MTSL…VQRS), 71–99 (AKED…GLSV), and 130–279 (PLAL…FFKV). The segment covering 130 to 186 (PLALSPGSSSSGPLASSPSVSSLSEQKTSSSSPLSSPSKSPVLSSSASSSALSSAKP) has biased composition (low complexity). The residue at position 195 (serine 195) is a Phosphoserine. A compositionally biased stretch (polar residues) spans 248 to 274 (QFTQPRNTGGDSKTAPSSPLTSPSDTR). Threonine 261 is subject to Phosphothreonine. Residues serine 264, serine 265, serine 269, and serine 294 each carry the phosphoserine modification. The segment at 345-387 (KEEEGDSEGEGYGSDSNTSRSDHLKPTEDASKEVEPKGSQASS) is disordered. A compositionally biased stretch (basic and acidic residues) spans 364–380 (RSDHLKPTEDASKEVEP). 2 helical membrane passes run 473–493 (TLGF…PYYM) and 495–515 (GLFL…WFFT). N-linked (GlcNAc...) asparagine glycosylation occurs at asparagine 593. The segment covering 645-671 (SKAQSDKEATEEKPPPEKELPSEDLKK) has biased composition (basic and acidic residues). Disordered stretches follow at residues 645–688 (SKAQ…DPIL), 716–765 (RKPA…QKEL), 787–821 (QDNR…EEEQ), and 945–981 (ADSD…GYVG). 7 positions are modified to phosphoserine: serine 733, serine 739, serine 745, serine 749, serine 752, serine 799, and serine 816. Low complexity predominate over residues 736–751 (SSPSGHLSHSRSSSKG). Over residues 796–806 (PVQSAESSPTA) the composition is skewed to polar residues. The 286-residue stretch at 817–1102 (EEEEQEAWVN…MPNMDDVYIP (286 aa)) folds into the SMP-LTD domain. The span at 946–963 (DSDEESSSAGSSEEDDPP) shows a compositional bias: acidic residues.

Its subcellular location is the endoplasmic reticulum membrane. It is found in the nucleus membrane. Functionally, during endoplasmic reticulum (ER) stress or when cellular ceramide levels increase, may induce contacts between the ER and medial-Golgi complex to facilitate non-vesicular transport of ceramides from the ER to the Golgi complex where they are converted to complex sphingolipids, preventing toxic ceramide accumulation. The sequence is that of Testis-expressed protein 2 (Tex2) from Mus musculus (Mouse).